A 503-amino-acid polypeptide reads, in one-letter code: MSAASTTSTPAAAAVAPQQPESLYRVVQTLGEGAFGEVLLIVNTKNPEVAAAMKKINIANKSKDFIDNIRKEYLLQKRVSAVGHDNVIRMIGMRNDPQFYYLFLEYADGGELFDKIEPDCGMSPVFAQFYFKQLICGLKFIHDNDVVHRDIKPENLLLTGTHVLKISDFGMATLYRNKGEERLLDLSCGTIPYAAPELCAGKKYRGPPVDVWSSGIVLIAMLTGELPWDRASDASQSYMGWISNTSLDERPWKKIDVRALCMLRKIVTDKTDKRATIEQIQADPWYQHNFGQVETPNGRPLKRARNNDENITCTQQAECSAKRRHLETPNEKSTLAERQNASFSQPTKTEDLLLTQHIDMSQTNSNLLQRMVCRMTRFCVVTDIRSTYQKVARASEHAGFGVRETDDYRLLVTWREVSMMVSLYTMGDIPDKPRVMVDFRRSRGDGIQFKKMFMDVRNRMHEWICTDGNNWLANLGYVPRNPQIVNGGGVNVEHSASSINVDV.

In terms of domain architecture, Protein kinase spans 24–286 (YRVVQTLGEG…IEQIQADPWY (263 aa)). Residues 30–38 (LGEGAFGEV) and K54 contribute to the ATP site. The active-site Proton acceptor is D150. The interval 320-346 (SAKRRHLETPNEKSTLAERQNASFSQP) is disordered. Residues 331–346 (EKSTLAERQNASFSQP) are compositionally biased toward polar residues. S344 bears the Phosphoserine mark.

The protein belongs to the protein kinase superfamily. CAMK Ser/Thr protein kinase family. NIM1 subfamily. In terms of tissue distribution, expressed in the germline.

Its subcellular location is the cytoplasm. The protein localises to the nucleus. The protein resides in the perinuclear region. The catalysed reaction is L-seryl-[protein] + ATP = O-phospho-L-seryl-[protein] + ADP + H(+). It carries out the reaction L-threonyl-[protein] + ATP = O-phospho-L-threonyl-[protein] + ADP + H(+). Functionally, serine/threonine-protein kinase which is required for checkpoint-mediated cell cycle arrest and activation of DNA repair in response to the presence of DNA damage or unreplicated DNA. May also negatively regulate cell cycle progression during unperturbed cell cycles. Required for checkpoint mediated cell cycle arrest in response to DNA damage in germline cells. Delays cell-cycle reentry of the Z2 and Z3 primordial germ cells in response to transcription-induced DNA damage as they emerge from cell cycle arrest in L1 larvae. Essential for embryogenesis. In Caenorhabditis elegans, this protein is Serine/threonine-protein kinase chk-1.